Consider the following 664-residue polypeptide: 1,4-alpha-glucan branching enzyme GlgB 2 (664 aa).

Basic and acidic residues predominate over residues 1-17 (MGGKEMRNCKELKHEKN). Residues 1–31 (MGGKEMRNCKELKHEKNGNVTEKVGKNKGKS) are disordered. Asp342 acts as the Nucleophile in catalysis. The active-site Proton donor is the Glu395.

It belongs to the glycosyl hydrolase 13 family. GlgB subfamily. As to quaternary structure, monomer.

The enzyme catalyses Transfers a segment of a (1-&gt;4)-alpha-D-glucan chain to a primary hydroxy group in a similar glucan chain.. It functions in the pathway glycan biosynthesis; glycogen biosynthesis. Catalyzes the formation of the alpha-1,6-glucosidic linkages in glycogen by scission of a 1,4-alpha-linked oligosaccharide from growing alpha-1,4-glucan chains and the subsequent attachment of the oligosaccharide to the alpha-1,6 position. This chain is 1,4-alpha-glucan branching enzyme GlgB 2 (glgB2), found in Clostridium perfringens (strain 13 / Type A).